Consider the following 256-residue polypeptide: MQYGRQILICIGILTVIILLLYGLLNSYWDRTVTFCKVRFNQLKNKFISQPLLSDHKENIAVSHIYKNDLFENNDIEYDPLLSKREADSYIIPSNNLACDNISAHKHIPLNNPKEIVLVLHVAAYNGTVLYGDSLWQSLLQTGLQFGEMNIFHRHLNPTGSGPVLFSLANMIKPGWFRFNSKNIATFTTPGVSMFMIIPSYGDANHNFKLMLQAAQQIADNCGGVVLDEEHHMLTPQKLDIYKARIRHVLSANKST.

Residues 1-6 (MQYGRQ) are Periplasmic-facing. Residues 7 to 27 (ILICIGILTVIILLLYGLLNS) form a helical membrane-spanning segment. Residues 28–256 (YWDRTVTFCK…RHVLSANKST (229 aa)) are Cytoplasmic-facing.

It belongs to the ZipA family. As to quaternary structure, interacts with FtsZ via their C-terminal domains.

The protein localises to the cell inner membrane. Functionally, essential cell division protein that stabilizes the FtsZ protofilaments by cross-linking them and that serves as a cytoplasmic membrane anchor for the Z ring. Also required for the recruitment to the septal ring of downstream cell division proteins. In Baumannia cicadellinicola subsp. Homalodisca coagulata, this protein is Cell division protein ZipA.